Here is a 255-residue protein sequence, read N- to C-terminus: Probable pyridoxal 5'-phosphate synthase subunit PDX2 (255 aa).

46 to 48 is a binding site for L-glutamine; that stretch reads GES. C78 (nucleophile) is an active-site residue. Residues R108 and 142–143 each bind L-glutamine; that span reads IR. Active-site charge relay system residues include H202 and E204. The segment at 225–255 is disordered; it reads GASSSSSKTIVSVGETSAGPEPAKPDLPIFQ.

It belongs to the glutaminase PdxT/SNO family. As to quaternary structure, interacts with PDX1.1 or PDX1.3, but not with PDX1.2. Binds to RPA2A. In terms of tissue distribution, strongly expressed in roots, stems, leaves and flowers.

The protein resides in the cytoplasm. It carries out the reaction aldehydo-D-ribose 5-phosphate + D-glyceraldehyde 3-phosphate + L-glutamine = pyridoxal 5'-phosphate + L-glutamate + phosphate + 3 H2O + H(+). It catalyses the reaction L-glutamine + H2O = L-glutamate + NH4(+). The protein operates within cofactor biosynthesis; pyridoxal 5'-phosphate biosynthesis. Catalyzes the hydrolysis of glutamine to glutamate and ammonia as part of the biosynthesis of pyridoxal 5'-phosphate. The resulting ammonia molecule is channeled to the active site of PDX1. Involved in the indirect resistance to singlet oxygen-generating photosensitizers. The chain is Probable pyridoxal 5'-phosphate synthase subunit PDX2 (PDX2) from Arabidopsis thaliana (Mouse-ear cress).